We begin with the raw amino-acid sequence, 554 residues long: CTP synthase (554 aa).

Residues 1–265 form an amidoligase domain region; that stretch reads MTPLIFVTGG…DELVIDQFKL (265 aa). Residue Ser-13 coordinates CTP. Residue Ser-13 coordinates UTP. ATP contacts are provided by residues 14–19 and Asp-71; that span reads SLGKGI. Residues Asp-71 and Glu-139 each coordinate Mg(2+). Residues 146–148, 186–191, and Lys-222 each bind CTP; these read DIE and KTKPTQ. Residues 186-191 and Lys-222 each bind UTP; that span reads KTKPTQ. Residues 292 to 545 form the Glutamine amidotransferase type-1 domain; sequence NIAVVGKYVD…VRAAREKKAG (254 aa). Gly-353 provides a ligand contact to L-glutamine. The active-site Nucleophile; for glutamine hydrolysis is the Cys-380. Residues 381–384, Glu-404, and Arg-471 contribute to the L-glutamine site; that span reads YGMQ. Residues His-518 and Glu-520 contribute to the active site.

Belongs to the CTP synthase family. As to quaternary structure, homotetramer.

It carries out the reaction UTP + L-glutamine + ATP + H2O = CTP + L-glutamate + ADP + phosphate + 2 H(+). The enzyme catalyses L-glutamine + H2O = L-glutamate + NH4(+). The catalysed reaction is UTP + NH4(+) + ATP = CTP + ADP + phosphate + 2 H(+). It participates in pyrimidine metabolism; CTP biosynthesis via de novo pathway; CTP from UDP: step 2/2. With respect to regulation, allosterically activated by GTP, when glutamine is the substrate; GTP has no effect on the reaction when ammonia is the substrate. The allosteric effector GTP functions by stabilizing the protein conformation that binds the tetrahedral intermediate(s) formed during glutamine hydrolysis. Inhibited by the product CTP, via allosteric rather than competitive inhibition. Functionally, catalyzes the ATP-dependent amination of UTP to CTP with either L-glutamine or ammonia as the source of nitrogen. Regulates intracellular CTP levels through interactions with the four ribonucleotide triphosphates. This Xanthomonas axonopodis pv. citri (strain 306) protein is CTP synthase.